We begin with the raw amino-acid sequence, 534 residues long: Pentatricopeptide repeat-containing protein At1g07590, mitochondrial (534 aa).

The N-terminal 20 residues, 1–20 (MRSIIALMRQREYFVQAIRR), are a transit peptide targeting the mitochondrion. 9 PPR repeats span residues 165–199 (NELL…GYRT), 200–234 (SHLV…KATP), 235–269 (HVST…GVEP), 270–300 (NEVS…IEKS), 305–335 (NWST…IRGF), 339–369 (RSKS…MKNV), 374–408 (ETEQ…GFKP), 409–443 (NSIT…KTSK), and 451–485 (WLET…KYNR).

The protein belongs to the PPR family. P subfamily.

It localises to the mitochondrion. This Arabidopsis thaliana (Mouse-ear cress) protein is Pentatricopeptide repeat-containing protein At1g07590, mitochondrial.